The chain runs to 128 residues: Ribonuclease P protein component (128 aa).

This sequence belongs to the RnpA family. In terms of assembly, consists of a catalytic RNA component (M1 or rnpB) and a protein subunit.

The enzyme catalyses Endonucleolytic cleavage of RNA, removing 5'-extranucleotides from tRNA precursor.. Functionally, RNaseP catalyzes the removal of the 5'-leader sequence from pre-tRNA to produce the mature 5'-terminus. It can also cleave other RNA substrates such as 4.5S RNA. The protein component plays an auxiliary but essential role in vivo by binding to the 5'-leader sequence and broadening the substrate specificity of the ribozyme. This chain is Ribonuclease P protein component, found in Prochlorococcus marinus (strain AS9601).